Consider the following 222-residue polypeptide: Deoxyribose-phosphate aldolase (222 aa).

The active-site Proton donor/acceptor is the Asp-93. The active-site Schiff-base intermediate with acetaldehyde is the Lys-156. Lys-186 serves as the catalytic Proton donor/acceptor.

The protein belongs to the DeoC/FbaB aldolase family. DeoC type 1 subfamily.

It localises to the cytoplasm. It catalyses the reaction 2-deoxy-D-ribose 5-phosphate = D-glyceraldehyde 3-phosphate + acetaldehyde. It participates in carbohydrate degradation; 2-deoxy-D-ribose 1-phosphate degradation; D-glyceraldehyde 3-phosphate and acetaldehyde from 2-deoxy-alpha-D-ribose 1-phosphate: step 2/2. Its function is as follows. Catalyzes a reversible aldol reaction between acetaldehyde and D-glyceraldehyde 3-phosphate to generate 2-deoxy-D-ribose 5-phosphate. The polypeptide is Deoxyribose-phosphate aldolase (Nocardia farcinica (strain IFM 10152)).